A 104-amino-acid chain; its full sequence is Large ribosomal subunit protein uL24 (104 aa).

Belongs to the universal ribosomal protein uL24 family. Part of the 50S ribosomal subunit.

One of two assembly initiator proteins, it binds directly to the 5'-end of the 23S rRNA, where it nucleates assembly of the 50S subunit. In terms of biological role, one of the proteins that surrounds the polypeptide exit tunnel on the outside of the subunit. In Pseudomonas aeruginosa (strain LESB58), this protein is Large ribosomal subunit protein uL24.